The primary structure comprises 361 residues: dTDP-glucose 4,6-dehydratase 1 (361 aa).

Residues 11–12 (FI), 32–35 (DKLT), 58–59 (DI), 80–84 (LAAES), and Thr-99 contribute to the NAD(+) site. Ser-84 provides a ligand contact to substrate. Residue Thr-133 coordinates substrate. Residue Asp-134 is the Proton donor of the active site. Active-site proton acceptor residues include Glu-135 and Tyr-167. 167-171 (YSASK) serves as a coordination point for NAD(+). Asn-196 is a binding site for substrate. Asn-197 contacts NAD(+). Residues 206 to 207 (KL), 222 to 224 (PIY), Arg-231, Asn-266, and 296 to 300 (DRPGH) contribute to the substrate site.

The protein belongs to the NAD(P)-dependent epimerase/dehydratase family. dTDP-glucose dehydratase subfamily. In terms of assembly, homodimer. The cofactor is NAD(+).

It carries out the reaction dTDP-alpha-D-glucose = dTDP-4-dehydro-6-deoxy-alpha-D-glucose + H2O. The protein operates within carbohydrate biosynthesis; dTDP-L-rhamnose biosynthesis. Its pathway is bacterial outer membrane biogenesis; LPS O-antigen biosynthesis. Catalyzes the dehydration of dTDP-D-glucose to form dTDP-6-deoxy-D-xylo-4-hexulose via a three-step process involving oxidation, dehydration and reduction. The polypeptide is dTDP-glucose 4,6-dehydratase 1 (rfbB) (Escherichia coli (strain K12)).